Reading from the N-terminus, the 96-residue chain is Protein Vpr (96 aa).

The homooligomerization stretch occupies residues 1–42 (MEQAPEDQGPQREPYNEWTLELLEELKNEAVRHFPRPWLHGL). Ser79 carries the phosphoserine; by host modification.

This sequence belongs to the HIV-1 VPR protein family. Homooligomer, may form homodimer. Interacts with p6-gag region of the Pr55 Gag precursor protein through a (Leu-X-X)4 motif near the C-terminus of the P6gag protein. Interacts with host UNG. May interact with host RAD23A/HHR23A. Interacts with host VPRBP/DCAF1, leading to hijack the CUL4A-RBX1-DDB1-DCAF1/VPRBP complex, mediating ubiquitination of host proteins such as TERT and ZGPAT and arrest of the cell cycle in G2 phase. In terms of processing, phosphorylated on several residues by host. These phosphorylations regulate VPR activity for the nuclear import of the HIV-1 pre-integration complex.

The protein localises to the virion. It is found in the host nucleus. The protein resides in the host extracellular space. Functionally, during virus replication, may deplete host UNG protein, and incude G2-M cell cycle arrest. Acts by targeting specific host proteins for degradation by the 26S proteasome, through association with the cellular CUL4A-DDB1 E3 ligase complex by direct interaction with host VPRPB/DCAF-1. Cell cycle arrest reportedly occurs within hours of infection and is not blocked by antiviral agents, suggesting that it is initiated by the VPR carried into the virion. Additionally, VPR induces apoptosis in a cell cycle dependent manner suggesting that these two effects are mechanistically linked. Detected in the serum and cerebrospinal fluid of AIDS patient, VPR may also induce cell death to bystander cells. Its function is as follows. During virus entry, plays a role in the transport of the viral pre-integration (PIC) complex to the host nucleus. This function is crucial for viral infection of non-dividing macrophages. May act directly at the nuclear pore complex, by binding nucleoporins phenylalanine-glycine (FG)-repeat regions. In Human immunodeficiency virus type 1 group M subtype G (isolate 92NG083) (HIV-1), this protein is Protein Vpr.